A 194-amino-acid chain; its full sequence is Imidazoleglycerol-phosphate dehydratase (194 aa).

It belongs to the imidazoleglycerol-phosphate dehydratase family.

Its subcellular location is the cytoplasm. It catalyses the reaction D-erythro-1-(imidazol-4-yl)glycerol 3-phosphate = 3-(imidazol-4-yl)-2-oxopropyl phosphate + H2O. It functions in the pathway amino-acid biosynthesis; L-histidine biosynthesis; L-histidine from 5-phospho-alpha-D-ribose 1-diphosphate: step 6/9. The polypeptide is Imidazoleglycerol-phosphate dehydratase (Thermoanaerobacter sp. (strain X514)).